The following is a 127-amino-acid chain: Snaclec macrovipecetin subunit beta (127 aa).

Intrachain disulfides connect cysteine 4/cysteine 15, cysteine 32/cysteine 121, and cysteine 98/cysteine 113. Positions 11–122 (YEGHCYKVFD…CSRTYKFVCK (112 aa)) constitute a C-type lectin domain.

In terms of assembly, heterodimer of subunits alpha and beta; disulfide-linked. In terms of tissue distribution, expressed by the venom gland.

It localises to the secreted. In terms of biological role, interferes with one step of hemostasis (modulation of platelet aggregation, or coagulation cascade, for example). The protein is Snaclec macrovipecetin subunit beta of Macrovipera lebetinus (Levantine viper).